The following is a 226-amino-acid chain: Glutathione peroxidase 3 (226 aa).

The N-terminal stretch at 1-24 (MARLLQASCLLSLLLAGFLPQSRG) is a signal peptide. Sec-73 is a catalytic residue. A non-standard amino acid (selenocysteine) is located at residue Sec-73.

It belongs to the glutathione peroxidase family. As to quaternary structure, homotetramer. In terms of tissue distribution, expressed intensively in the kidney and adrenal gland, and weakly in the cerebellum, heart, and lung. Secreted in plasma.

It is found in the secreted. It catalyses the reaction 2 glutathione + H2O2 = glutathione disulfide + 2 H2O. It carries out the reaction tert-butyl hydroperoxide + 2 glutathione = tert-butanol + glutathione disulfide + H2O. Its function is as follows. Protects cells and enzymes from oxidative damage, by catalyzing the reduction of hydrogen peroxide, lipid peroxides and organic hydroperoxide, by glutathione. This chain is Glutathione peroxidase 3, found in Macaca fuscata fuscata (Japanese macaque).